Consider the following 148-residue polypeptide: Nucleoside diphosphate kinase (148 aa).

The ATP site is built by K9, F57, R85, T91, R102, and N112. Position 91 is a phosphothreonine (T91). The active-site Pros-phosphohistidine intermediate is H115. S122 is subject to Phosphoserine.

It belongs to the NDK family. Homotetramer. The cofactor is Mg(2+).

The protein resides in the cytoplasm. It carries out the reaction a 2'-deoxyribonucleoside 5'-diphosphate + ATP = a 2'-deoxyribonucleoside 5'-triphosphate + ADP. The catalysed reaction is a ribonucleoside 5'-diphosphate + ATP = a ribonucleoside 5'-triphosphate + ADP. Major role in the synthesis of nucleoside triphosphates other than ATP. The ATP gamma phosphate is transferred to the NDP beta phosphate via a ping-pong mechanism, using a phosphorylated active-site intermediate. In Bacillus anthracis, this protein is Nucleoside diphosphate kinase.